The chain runs to 392 residues: RNA-binding motif protein, X-linked-like-2 (392 aa).

Residues 8–86 enclose the RRM domain; that stretch reads GKLFIGGLNL…KAIKVAQATK (79 aa). The span at 67–78 shows a compositional bias: basic and acidic residues; the sequence is RDMNGKSLDGKA. The tract at residues 67–392 is disordered; that stretch reads RDMNGKSLDG…LERGGGRSRY (326 aa). Positions 150 to 163 are enriched in pro residues; sequence RGPPPRRVGPPPKR. Basic and acidic residues-rich tracts occupy residues 194 to 229 and 238 to 283; these read PRREPLPPRRDPYLGPRDEGYSSRDGYSSRDYREPR and YTHR…REPF. Low complexity predominate over residues 319-331; that stretch reads YSGGRDSYSSSYG. The span at 381-392 shows a compositional bias: basic and acidic residues; it reads GRLERGGGRSRY.

Expressed predominantly in spermatocytes and less in round spermatids (at protein level). Expressed in germ cells.

The protein resides in the nucleus. The protein is RNA-binding motif protein, X-linked-like-2 (RBMXL2) of Homo sapiens (Human).